The following is a 194-amino-acid chain: Nucleoside triphosphate pyrophosphatase (194 aa).

The active-site Proton acceptor is Asp68.

The protein belongs to the Maf family. It depends on a divalent metal cation as a cofactor.

Its subcellular location is the cytoplasm. It carries out the reaction a ribonucleoside 5'-triphosphate + H2O = a ribonucleoside 5'-phosphate + diphosphate + H(+). The catalysed reaction is a 2'-deoxyribonucleoside 5'-triphosphate + H2O = a 2'-deoxyribonucleoside 5'-phosphate + diphosphate + H(+). In terms of biological role, nucleoside triphosphate pyrophosphatase. May have a dual role in cell division arrest and in preventing the incorporation of modified nucleotides into cellular nucleic acids. This is Nucleoside triphosphate pyrophosphatase from Corynebacterium jeikeium (strain K411).